Reading from the N-terminus, the 992-residue chain is Disks large-associated protein 4 (992 aa).

Residues 1–20 (MKGLGDSRPRHLSDSLDPPH) show a composition bias toward basic and acidic residues. Disordered stretches follow at residues 1–30 (MKGL…TDRN), 47–66 (PGQN…QLPP), and 157–206 (LEGT…GWWS). Over residues 162–171 (GKVGGNGSKK) the composition is skewed to gly residues. The span at 172–194 (GGMEDGKGRRAKSKERAKAGEPK) shows a compositional bias: basic and acidic residues. Phosphoserine is present on residues Ser206 and Ser207. Omega-N-methylarginine is present on Arg291. The tract at residues 342–396 (STTLLSPRETDAAAEGPIPCRRMRSGSYIKAMGDEDSDESGGSPKPSPKTAARRQ) is disordered. Phosphoserine is present on residues Ser378, Ser381, Ser388, Ser405, Ser415, and Ser421. 3 disordered regions span residues 527–751 (SVSL…GPRQ), 763–798 (SYGD…AQPG), and 915–992 (TPEK…QTRL). Over residues 528–554 (VSLQSLSPPPSTGSLSNSRTLPSSSCL) the composition is skewed to low complexity. Positions 576–591 (VTVQSSTESAQDTYLD) are enriched in polar residues. Residues Ser580, Ser581, Ser609, Ser611, Ser665, and Ser744 each carry the phosphoserine modification. The span at 600–620 (TSQSGLSNSSDSLDSSTRPPS) shows a compositional bias: low complexity. A Phosphothreonine modification is found at Thr915. Composition is skewed to basic and acidic residues over residues 915–925 (TPEKRKEEKKP) and 940–958 (VSRD…EARK). Residues 969–978 (VRQNSATESA) show a composition bias toward polar residues. At Ser973 the chain carries Phosphoserine.

The protein belongs to the SAPAP family. As to quaternary structure, interacts with DLG1 and DLG4/PSD-95.

Its subcellular location is the membrane. In terms of biological role, may play a role in the molecular organization of synapses and neuronal cell signaling. Could be an adapter protein linking ion channel to the subsynaptic cytoskeleton. May induce enrichment of PSD-95/SAP90 at the plasma membrane. The protein is Disks large-associated protein 4 (DLGAP4) of Homo sapiens (Human).